The sequence spans 506 residues: Lysine--tRNA ligase (506 aa).

Mg(2+) contacts are provided by E415 and E422.

The protein belongs to the class-II aminoacyl-tRNA synthetase family. Homodimer. Mg(2+) is required as a cofactor.

It localises to the cytoplasm. It carries out the reaction tRNA(Lys) + L-lysine + ATP = L-lysyl-tRNA(Lys) + AMP + diphosphate. This Erwinia tasmaniensis (strain DSM 17950 / CFBP 7177 / CIP 109463 / NCPPB 4357 / Et1/99) protein is Lysine--tRNA ligase.